The sequence spans 82 residues: DNA-directed RNA polymerase subunit Rpo5 (82 aa).

The protein belongs to the archaeal Rpo5/eukaryotic RPB5 RNA polymerase subunit family. In terms of assembly, part of the RNA polymerase complex.

The protein localises to the cytoplasm. The enzyme catalyses RNA(n) + a ribonucleoside 5'-triphosphate = RNA(n+1) + diphosphate. In terms of biological role, DNA-dependent RNA polymerase (RNAP) catalyzes the transcription of DNA into RNA using the four ribonucleoside triphosphates as substrates. The sequence is that of DNA-directed RNA polymerase subunit Rpo5 from Thermococcus celer.